We begin with the raw amino-acid sequence, 129 residues long: D-ribose pyranase (129 aa).

His-20 serves as the catalytic Proton donor. Residues Asp-28, His-96, and 118–120 (YAN) each bind substrate.

This sequence belongs to the RbsD / FucU family. RbsD subfamily. In terms of assembly, homodecamer.

Its subcellular location is the cytoplasm. It carries out the reaction beta-D-ribopyranose = beta-D-ribofuranose. It participates in carbohydrate metabolism; D-ribose degradation; D-ribose 5-phosphate from beta-D-ribopyranose: step 1/2. Catalyzes the interconversion of beta-pyran and beta-furan forms of D-ribose. The sequence is that of D-ribose pyranase from Staphylococcus haemolyticus (strain JCSC1435).